We begin with the raw amino-acid sequence, 430 residues long: Adenylosuccinate synthetase (430 aa).

GTP-binding positions include 12-18 and 40-42; these read GDEGKGK and GHT. Residue aspartate 13 is the Proton acceptor of the active site. Residues aspartate 13 and glycine 40 each contribute to the Mg(2+) site. Residues 13–16, 38–41, threonine 128, arginine 142, glutamine 223, threonine 238, and arginine 302 each bind IMP; these read DEGK and NAGH. The active-site Proton donor is the histidine 41. 298-304 contacts substrate; it reads TTTGRPR. Residues arginine 304, 330–332, and 413–415 contribute to the GTP site; these read SID and SVG.

This sequence belongs to the adenylosuccinate synthetase family. As to quaternary structure, homodimer. Mg(2+) serves as cofactor.

It localises to the cytoplasm. The catalysed reaction is IMP + L-aspartate + GTP = N(6)-(1,2-dicarboxyethyl)-AMP + GDP + phosphate + 2 H(+). It functions in the pathway purine metabolism; AMP biosynthesis via de novo pathway; AMP from IMP: step 1/2. Functionally, plays an important role in the de novo pathway of purine nucleotide biosynthesis. Catalyzes the first committed step in the biosynthesis of AMP from IMP. This chain is Adenylosuccinate synthetase, found in Lactococcus lactis subsp. cremoris (strain MG1363).